The sequence spans 794 residues: Signal transducer and activator of transcription 5A (794 aa).

Position 90 is a phosphotyrosine (Y90). S129 is modified (phosphoserine). In terms of domain architecture, SH2 spans W589–V686. A Phosphotyrosine modification is found at Y682. Y694 is subject to Phosphotyrosine; by JAK2. Positions E765–S794 are disordered.

It belongs to the transcription factor STAT family. In terms of assembly, forms a homodimer or a heterodimer with a related family member. Binds NR3C1. Interacts with NCOA1 and SOCS7. Interacts with ERBB4. Interacts with EBF4. Interacts with CD69. ISGylated. Post-translationally, tyrosine phosphorylated in response to KITLG/SCF, IL2, IL3, IL7, IL15, CSF2/GMCSF, GH1, PRL, EPO and THPO. Activated KIT promotes phosphorylation on tyrosine residues and subsequent translocation to the nucleus. Tyrosine phosphorylated in response to constitutively activated FGFR1, FGFR2, FGFR3 and FGFR4. Tyrosine phosphorylation is required for DNA-binding activity and dimerization. Serine phosphorylation is also required for maximal transcriptional activity. Tyrosine phosphorylated in response to signaling via activated FLT3; wild-type FLT3 results in much weaker phosphorylation than constitutively activated mutant FLT3. Alternatively, can be phosphorylated by JAK2 at Tyr-694. In terms of tissue distribution, found in mammary gland and, in lesser extent, in ovary, thymus, spleen, kidney, lung, muscle and adrenal gland.

The protein resides in the cytoplasm. It localises to the nucleus. Its function is as follows. Carries out a dual function: signal transduction and activation of transcription. Mediates cellular responses to the cytokine KITLG/SCF and other growth factors. May mediate cellular responses to activated FGFR1, FGFR2, FGFR3 and FGFR4. Binds to the GAS element and activates PRL-induced transcription. Regulates the expression of milk proteins during lactation. This Ovis aries (Sheep) protein is Signal transducer and activator of transcription 5A (STAT5A).